Consider the following 176-residue polypeptide: Ribosome maturation factor RimM (176 aa).

A PRC barrel domain is found at 99–173 (KEGEFHLVDL…WLLIKPPPGL (75 aa)).

Belongs to the RimM family. As to quaternary structure, binds ribosomal protein uS19.

It is found in the cytoplasm. Its function is as follows. An accessory protein needed during the final step in the assembly of 30S ribosomal subunit, possibly for assembly of the head region. Essential for efficient processing of 16S rRNA. May be needed both before and after RbfA during the maturation of 16S rRNA. It has affinity for free ribosomal 30S subunits but not for 70S ribosomes. This chain is Ribosome maturation factor RimM, found in Prochlorococcus marinus (strain MIT 9211).